Consider the following 358-residue polypeptide: DNA replication and repair protein RecF (358 aa).

Gly-30 to Thr-37 is a binding site for ATP.

It belongs to the RecF family.

Its subcellular location is the cytoplasm. Functionally, the RecF protein is involved in DNA metabolism; it is required for DNA replication and normal SOS inducibility. RecF binds preferentially to single-stranded, linear DNA. It also seems to bind ATP. In Histophilus somni (strain 129Pt) (Haemophilus somnus), this protein is DNA replication and repair protein RecF.